Consider the following 496-residue polypeptide: Ganglioside-induced differentiation-associated protein 2 (496 aa).

Disordered regions lie at residues 22–45 (VRDG…GLHS) and 252–271 (PERQ…DSEE). Residues 44-224 (HSPFPYRNDI…TYRRLLPLYF (181 aa)) form the Macro domain. Positions 254–264 (RQIRISEKPGG) are enriched in basic and acidic residues. The CRAL-TRIO domain maps to 329–483 (DLSDIAALKA…FVLDYDAREN (155 aa)).

This sequence belongs to the GDAP2 family.

In Xenopus tropicalis (Western clawed frog), this protein is Ganglioside-induced differentiation-associated protein 2.